Reading from the N-terminus, the 229-residue chain is uncharacterized protein (229 aa).

A disordered region spans residues 1-41 (MRSAKVGVARQLETKKPQTGRKISTSSRGTIHSQQSQPEDI). A compositionally biased stretch (polar residues) spans 21–39 (RKISTSSRGTIHSQQSQPE). 4 EF-hand domains span residues 48-83 (KELKEYRQLFNMFDTDGSGAIGNEELKQAMISIGLH), 84-119 (ANKAEIDNVIKEVDADGNGEIDFEEFCACMKKSQNI), 123-158 (TNEELIRECFEIFDQDRNGIITENEFKYIAKEFGDF), and 159-193 (DDELAEKVFRELDVSANGHLSADQFATIVEDYLLN). 13 residues coordinate Ca(2+): Asp-61, Asp-63, Ser-65, Glu-72, Asp-97, Asp-99, Asn-101, Glu-103, Glu-108, Asp-136, Asp-138, Asn-140, and Glu-147. The span at 194–217 (DPKHDIDTGDSDVERYDDRHDDRA) shows a compositional bias: basic and acidic residues. The disordered stretch occupies residues 194 to 229 (DPKHDIDTGDSDVERYDDRHDDRASPMPNHLSTVPE).

This is an uncharacterized protein from Caenorhabditis elegans.